A 36-amino-acid chain; its full sequence is Pancreatic polypeptide (36 aa).

Phenylalanine 36 carries the post-translational modification Phenylalanine amide.

Belongs to the NPY family.

The protein resides in the secreted. In terms of biological role, hormone secreted by pancreatic cells that acts as a regulator of pancreatic and gastrointestinal functions. This chain is Pancreatic polypeptide (ppy), found in Rana temporaria (European common frog).